We begin with the raw amino-acid sequence, 138 residues long: Basic phospholipase A2 ammodytoxin A (138 aa).

The N-terminal stretch at 1 to 16 (MRTLWIVAVCLIGVEG) is a signal peptide. 7 disulfides stabilise this stretch: cysteine 42–cysteine 131, cysteine 44–cysteine 60, cysteine 59–cysteine 111, cysteine 65–cysteine 138, cysteine 66–cysteine 104, cysteine 73–cysteine 97, and cysteine 91–cysteine 102. The Ca(2+) site is built by tyrosine 43, glycine 45, and glycine 47. Residue histidine 63 is part of the active site. Position 64 (aspartate 64) interacts with Ca(2+). Aspartate 105 is a catalytic residue.

It belongs to the phospholipase A2 family. Group II subfamily. D49 sub-subfamily. Monomer. Binds to calmodulin, coagulation factor X (F10), M-type PLA2 receptor (R-180). May also bind to 14-3-3 proteins gamma (YWHAG) and epsilon (YWHAE), and R25, a mitochondrial membrane protein. The cofactor is Ca(2+). In terms of tissue distribution, expressed by the venom gland.

It is found in the secreted. Its subcellular location is the host cytoplasm. It localises to the host cytosol. The enzyme catalyses a 1,2-diacyl-sn-glycero-3-phosphocholine + H2O = a 1-acyl-sn-glycero-3-phosphocholine + a fatty acid + H(+). Its function is as follows. Snake venom phospholipase A2 (PLA2) that acts as a presynaptic neurotoxin, an inhibitor of blood coagulation, and has been found to bind with high affinity to intracellular proteins. The response of indirectly stimulated neuromuscular preparations to ammodytoxin (Atx) is triphasic. The first phase, the transient inhibition of the acetylcholine (ACh) release, starts soon after the addition of Atx and lasts for several minutes. This phase is probably independent of Atx enzymatic activity. The effect may be due to the specific binding of the toxin to presynaptic receptors. These receptors, called N-type receptors, are still unidentified. It is noteworthy that a neuronal isoform of the M-type PLA2 receptor (R180) has been identified as a high-affinity receptor for Atx in neuronal plasma membranes. It was demonstrated however that this receptor is not essential for expression of neurotoxicity by Atx. The second phase corresponds to an augmentation of neurotransmitter release. A peak is reached 10-20 minutes after exposure of the preparation to Atx and is followed by a gradual reduction. In this phase, the enzymatic activity of Atx of the mammalian is not significant. It is speculated that the increased release of neurotransmitter in this phase is induced by the interference of Atx with voltage-gated potassium channels. Measurements of ionic currents showed however that voltage-gated potassium channels are not affected by Atx. The third phase of the response of neuromuscular preparations to Atx, which corresponds to a complete and irreversible paralysis, is clearly dependent on the hydrolytic activity of the toxin. In addition to its presynaptic neurotoxicity, Atx shows an anticoagulant activity by binding with high affinity to activated coagulation factor X (F10) thus inhibiting the formation of the prothrombinase complex (FX/FV) and its activity (IC(50) is 20 nM). Surprisingly, Atx was discovered to bind intracellular proteins such as calmodulin (CaM) (IC(50) is 6 nM), 14-3-3 proteins gamma (YWHAG) and epsilon (YWHAE) (by similarity with AtxC), as well as R25 (by similarity with AtxC), a mitochondrial integral membrane protein found in cerebral cortex. These findings raised a doubt about the dogma of the exclusively extracellular action of PLA2s, defended by the potential instability of these molecules in the reducing environment of the eukaryotic cytosol coupled with their possible inability to act as enzymes in this cellular compartment, due to too low concentration of calcium ions. This hypothesis was challenged efficiently by demonstrating the internalization of AtxA into a culture cells, but still remains to be directly demonstrated in vivo. PLA2 catalyzes the calcium-dependent hydrolysis of the 2-acyl groups in 3-sn-phosphoglycerides. This chain is Basic phospholipase A2 ammodytoxin A, found in Vipera ammodytes ammodytes (Western sand viper).